A 192-amino-acid chain; its full sequence is UPF0301 protein BTH_I1462 (192 aa).

The protein belongs to the UPF0301 (AlgH) family.

In Burkholderia thailandensis (strain ATCC 700388 / DSM 13276 / CCUG 48851 / CIP 106301 / E264), this protein is UPF0301 protein BTH_I1462.